The chain runs to 180 residues: Cytochrome c oxidase assembly protein CtaG (180 aa).

Residues 1 to 8 (MSKKSNKS) are Cytoplasmic-facing. The helical; Signal-anchor for type II membrane protein transmembrane segment at 9 to 29 (LAFSLLGLIVSMVLLSFAAVP) threads the bilayer. At 30–180 (LYNLFCKVTG…SFFKVRDVKK (151 aa)) the chain is on the periplasmic side.

It belongs to the COX11/CtaG family.

Its subcellular location is the cell inner membrane. Exerts its effect at some terminal stage of cytochrome c oxidase synthesis, probably by being involved in the insertion of the copper B into subunit I. This Rickettsia bellii (strain RML369-C) protein is Cytochrome c oxidase assembly protein CtaG.